We begin with the raw amino-acid sequence, 177 residues long: Parathyroid hormone-related protein (177 aa).

Residues 1–24 form the signal peptide; sequence MLRRLVQQWGVAVFLLSYSVPSCG. Positions 25 to 34 are excised as a propeptide; the sequence is RSVEELGRRL. The segment at 57–68 is important for receptor binding; that stretch reads RFFLHHLIAEIH. The segment at 74–177 is disordered; it reads ATSEVSPNSK…TSLELNLRRH (104 aa). Positions 76–90 are enriched in polar residues; it reads SEVSPNSKPAPNTKN. The short motif at 108–129 is the Nuclear localization signal element; it reads TNKVETYKEQPLKTPGKKKKGK. A compositionally biased stretch (basic and acidic residues) spans 109-118; it reads NKVETYKEQP. Basic residues predominate over residues 122-132; it reads PGKKKKGKPGK.

The protein belongs to the parathyroid hormone family. PTHrP interacts with PTH1R (via N-terminal extracellular domain). Post-translationally, there are several secretory forms, including osteostatin, arising from endoproteolytic cleavage of the initial translation product. Each of these secretory forms is believed to have one or more of its own receptors that mediates the normal paracrine, autocrine and endocrine actions.

It localises to the secreted. Its subcellular location is the cytoplasm. The protein resides in the nucleus. Its function is as follows. Neuroendocrine peptide which is a critical regulator of cellular and organ growth, development, migration, differentiation and survival and of epithelial calcium ion transport. Acts by binding to its receptor, PTH1R, activating G protein-coupled receptor signaling. Regulates endochondral bone development and epithelial-mesenchymal interactions during the formation of the mammary glands and teeth. Required for skeletal homeostasis. Promotes mammary mesenchyme differentiation and bud outgrowth by modulating mesenchymal cell responsiveness to BMPs. Up-regulates BMPR1A expression in the mammary mesenchyme and this increases the sensitivity of these cells to BMPs and allows them to respond to BMP4 in a paracrine and/or autocrine fashion. BMP4 signaling in the mesenchyme, in turn, triggers epithelial outgrowth and augments MSX2 expression, which causes the mammary mesenchyme to inhibit hair follicle formation within the nipple sheath. Functionally, potent inhibitor of osteoclastic bone resorption. The polypeptide is Parathyroid hormone-related protein (PTHLH) (Canis lupus familiaris (Dog)).